The sequence spans 384 residues: 1-deoxy-D-xylulose 5-phosphate reductoisomerase (384 aa).

7 residues coordinate NADPH: Thr-10, Gly-11, Ser-12, Ile-13, Arg-37, Asn-38, and Asn-124. Position 125 (Lys-125) interacts with 1-deoxy-D-xylulose 5-phosphate. An NADPH-binding site is contributed by Glu-126. Asp-150 contributes to the Mn(2+) binding site. The 1-deoxy-D-xylulose 5-phosphate site is built by Ser-151, Glu-152, Ser-176, and His-199. Residue Glu-152 coordinates Mn(2+). Gly-205 is an NADPH binding site. 4 residues coordinate 1-deoxy-D-xylulose 5-phosphate: Ser-212, Asn-217, Lys-218, and Glu-221. Glu-221 serves as a coordination point for Mn(2+).

This sequence belongs to the DXR family. It depends on Mg(2+) as a cofactor. Requires Mn(2+) as cofactor.

It catalyses the reaction 2-C-methyl-D-erythritol 4-phosphate + NADP(+) = 1-deoxy-D-xylulose 5-phosphate + NADPH + H(+). Its pathway is isoprenoid biosynthesis; isopentenyl diphosphate biosynthesis via DXP pathway; isopentenyl diphosphate from 1-deoxy-D-xylulose 5-phosphate: step 1/6. Functionally, catalyzes the NADPH-dependent rearrangement and reduction of 1-deoxy-D-xylulose-5-phosphate (DXP) to 2-C-methyl-D-erythritol 4-phosphate (MEP). The polypeptide is 1-deoxy-D-xylulose 5-phosphate reductoisomerase (Clostridium perfringens (strain ATCC 13124 / DSM 756 / JCM 1290 / NCIMB 6125 / NCTC 8237 / Type A)).